Reading from the N-terminus, the 91-residue chain is MGCIKSKQDCTVHKTIQLTRNQEKDEMHNKELVGLVQANQEDSKLCSCSASPLLLEYAHRLSEDIVNKAVRQWAEVDSKYSDIPYIESDAI.

Gly-2 carries the N-myristoyl glycine lipid modification.

It belongs to the small membrane AKAP family. In terms of processing, may be palmitoylated at Cys-3.

Its subcellular location is the cell membrane. In terms of biological role, binds to type I regulatory subunits of protein kinase A and may anchor/target them to the plasma membrane. The polypeptide is Small membrane A-kinase anchor protein (Xenopus laevis (African clawed frog)).